Reading from the N-terminus, the 401-residue chain is Ribosomal RNA dihydrouridine synthase (401 aa).

A15, D34, N35, R41, G47, N52, V132, E371, and F384 together coordinate FAD.

This sequence belongs to the BaiN/RdsA family. RdsA subfamily. The cofactor is FAD.

It carries out the reaction a 5,6-dihydrouridine in mRNA + NAD(+) = a uridine in mRNA + NADH + H(+). Catalyzes the synthesis of 5,6-dihydrouridine (D) at position 2449 in 23S rRNA. The chain is Ribosomal RNA dihydrouridine synthase from Haemophilus influenzae (strain ATCC 51907 / DSM 11121 / KW20 / Rd).